The primary structure comprises 196 residues: Small ribosomal subunit protein uS4C (196 aa).

One can recognise an S4 RNA-binding domain in the interval 87-149 (CRLDNVVYRI…HRQNEMFSNN (63 aa)).

This sequence belongs to the universal ribosomal protein uS4 family. As to quaternary structure, part of the 30S ribosomal subunit. Contacts protein S5. The interaction surface between S4 and S5 is involved in control of translational fidelity.

One of the primary rRNA binding proteins, it binds directly to 16S rRNA where it nucleates assembly of the body of the 30S subunit. Functionally, with S5 and S12 plays an important role in translational accuracy. This chain is Small ribosomal subunit protein uS4C (rpsD3), found in Clostridium acetobutylicum (strain ATCC 824 / DSM 792 / JCM 1419 / IAM 19013 / LMG 5710 / NBRC 13948 / NRRL B-527 / VKM B-1787 / 2291 / W).